The chain runs to 374 residues: S-adenosylmethionine:tRNA ribosyltransferase-isomerase (374 aa).

This sequence belongs to the QueA family. Monomer.

The protein localises to the cytoplasm. The catalysed reaction is 7-aminomethyl-7-carbaguanosine(34) in tRNA + S-adenosyl-L-methionine = epoxyqueuosine(34) in tRNA + adenine + L-methionine + 2 H(+). It functions in the pathway tRNA modification; tRNA-queuosine biosynthesis. Functionally, transfers and isomerizes the ribose moiety from AdoMet to the 7-aminomethyl group of 7-deazaguanine (preQ1-tRNA) to give epoxyqueuosine (oQ-tRNA). This chain is S-adenosylmethionine:tRNA ribosyltransferase-isomerase, found in Sorangium cellulosum (strain So ce56) (Polyangium cellulosum (strain So ce56)).